A 485-amino-acid polypeptide reads, in one-letter code: GTPase Obg (485 aa).

Residues 2–159 (PRFVDRVVIH…RDLTLELKTV (158 aa)) enclose the Obg domain. An OBG-type G domain is found at 160–341 (ADVGLIGFPS…LIFALWEMVK (182 aa)). GTP is bound by residues 166 to 173 (GFPSAGKS), 191 to 195 (FTTLV), 212 to 215 (DVPG), 292 to 295 (NKID), and 322 to 324 (STV). 2 residues coordinate Mg(2+): serine 173 and threonine 193. The OCT domain maps to 359–437 (PIPVDESGFT…IGDVTFDWEP (79 aa)). Residues 450-485 (RGTDIRLEQTDRVGAAERKAARRERRQPGESGGEDS) form a disordered region. Positions 452–468 (TDIRLEQTDRVGAAERK) are enriched in basic and acidic residues.

Belongs to the TRAFAC class OBG-HflX-like GTPase superfamily. OBG GTPase family. In terms of assembly, monomer. It depends on Mg(2+) as a cofactor.

It is found in the cytoplasm. An essential GTPase which binds GTP, GDP and possibly (p)ppGpp with moderate affinity, with high nucleotide exchange rates and a fairly low GTP hydrolysis rate. Plays a role in control of the cell cycle, stress response, ribosome biogenesis and in those bacteria that undergo differentiation, in morphogenesis control. This chain is GTPase Obg, found in Mycolicibacterium smegmatis (strain ATCC 700084 / mc(2)155) (Mycobacterium smegmatis).